A 524-amino-acid polypeptide reads, in one-letter code: Cytochrome P450 monooxygenase alt1 (524 aa).

Residues 24-44 (IANMLSVIAFSICISPIVYFL) form a helical membrane-spanning segment. Cys-469 is a heme binding site.

This sequence belongs to the cytochrome P450 family. Requires heme as cofactor.

The protein localises to the membrane. It functions in the pathway secondary metabolite biosynthesis. In terms of biological role, cytochrome P450 monooxygenase; part of the gene cluster that mediates the biosynthesis of alternapyrone derivatives. Alternapyrone is a decaketide with octa-methylation from methionine on every C2 unit except the third unit. All the domains in the polyketide synthase alt5 are apparently involved in alternapyrone synthesis, that is, the 8 CMeT, 7 KR, 7 DH, and 4 ER reactions in the 9 KS-mediated condensation steps required for alternapyrone synthesis. the alternapyrone produced by alt5 might be intensively modified by cytochrome P450 monooxygenases alt1, alt2 and alt3 and FAD-dependent oxidoreductase alt4 present in the alt gene cluster. This chain is Cytochrome P450 monooxygenase alt1, found in Alternaria solani.